We begin with the raw amino-acid sequence, 330 residues long: MKDKAYDITIIGGGPIGLFAAFYAGLRGVTVKIIESLSELGGQPAILYPEKMIYDIPAYPSLTGAELTENLIKQLSRFEDRTTICLKEEVLTFDKVKGGFSIRTNKAEHFSKAIIIACGNGAFAPRTLGLESEENFADHNLFYNVHQLDQFAGQKVVICGGGDSAVDWALALEDIAESVTVVHRRDAFRAHEHSVELLKASTVNLLTPYVPKALKGIGNLAEKLVIQKVKEDEVLELELDSLIVSFGFSTSNKNLKNWNLDYKRSSITVSPLFQTSQEGIFAIGDAAAYKGKVDLIATGFGEAPTAVNQAINYIYPDRDNRVVHSTSLID.

Residues Glu35, Gln43, Tyr48, Val90, Phe123, Asp285, and Thr326 each coordinate FAD.

The protein belongs to the ferredoxin--NADP reductase type 2 family. As to quaternary structure, homodimer. FAD is required as a cofactor.

The catalysed reaction is 2 reduced [2Fe-2S]-[ferredoxin] + NADP(+) + H(+) = 2 oxidized [2Fe-2S]-[ferredoxin] + NADPH. This is Ferredoxin--NADP reductase from Streptococcus pyogenes serotype M2 (strain MGAS10270).